The following is a 319-amino-acid chain: Zinc metalloproteinase/disintegrin (319 aa).

Residues 1–28 (EDEAPKMCGVTQNWESYEPIKKASQSNL) constitute a propeptide that is removed on maturation. The Peptidase M12B domain occupies 34–230 (RYIELVIVAD…QKPQCILNKP (197 aa)). Ca(2+)-binding residues include Glu-37 and Asp-121. 3 disulfide bridges follow: Cys-145–Cys-225, Cys-185–Cys-209, and Cys-187–Cys-192. Position 170 (His-170) interacts with Zn(2+). Residue Glu-171 is part of the active site. Zn(2+) contacts are provided by His-174 and His-180. Ca(2+) contacts are provided by Cys-225 and Asn-228. Residues 231–246 (LRTDTVSTPVSGNELL) constitute a propeptide that is removed on maturation. Residues 238 to 319 (TPVSGNELLE…AGCPRNPFHA (82 aa)) enclose the Disintegrin domain. Intrachain disulfides connect Cys-252–Cys-267, Cys-254–Cys-262, Cys-261–Cys-284, Cys-275–Cys-281, Cys-280–Cys-305, and Cys-293–Cys-312. Positions 297-299 (RGD) match the Cell attachment site motif.

Belongs to the venom metalloproteinase (M12B) family. P-II subfamily. P-IIa sub-subfamily. Monomer. Zn(2+) serves as cofactor. In terms of tissue distribution, expressed by the venom gland.

It localises to the secreted. With respect to regulation, excess of calcium ions significantly suppress the autoproteolysis of the enzyme. Its function is as follows. metalloproteinase that impairs hemostasis in the envenomed animal. Shows autoproteolysis dependent on pH and temperature. Does not show hemorrhagic activity. Functionally, inhibits platelet aggregation induced by ADP (IC(50) is 200 nM), collagen (IC(50) is 500 nM), thrombin and epinephrin (IC(50) is 300 nM). Does not inhibit aggregation induced by ristocetin. In terms of biological role, inhibits platelet aggregation induced by ADP (IC(50) is 100 nM), collagen (IC(50) is 500 nM), thrombin and epinephrin (IC(50) is 300 nM). Does not inhibit aggregation induced by ristocetin. Significantly inhibits angiogenesis both in vivo and in vitro. This is Zinc metalloproteinase/disintegrin from Gloydius brevicauda (Korean slamosa snake).